We begin with the raw amino-acid sequence, 157 residues long: Ribosomal RNA large subunit methyltransferase H (157 aa).

S-adenosyl-L-methionine-binding positions include Leu-73, Gly-105, and 124–129 (LSKMTF).

The protein belongs to the RNA methyltransferase RlmH family. Homodimer.

The protein resides in the cytoplasm. The catalysed reaction is pseudouridine(1915) in 23S rRNA + S-adenosyl-L-methionine = N(3)-methylpseudouridine(1915) in 23S rRNA + S-adenosyl-L-homocysteine + H(+). Functionally, specifically methylates the pseudouridine at position 1915 (m3Psi1915) in 23S rRNA. The sequence is that of Ribosomal RNA large subunit methyltransferase H from Christiangramia forsetii (strain DSM 17595 / CGMCC 1.15422 / KT0803) (Gramella forsetii).